Consider the following 354-residue polypeptide: CX3C chemokine receptor 1 (354 aa).

The Extracellular portion of the chain corresponds to 1–32 (MSTSFPELDLENFEYDDSAEACYLGDIVAFGT). Residues 33-60 (IFLSVFYALVFTFGLVGNLLVVLALTNS) traverse the membrane as a helical segment. The Cytoplasmic portion of the chain corresponds to 61-70 (RKPKSITDIY). The chain crosses the membrane as a helical span at residues 71–91 (LLNLALSDLLFVATLPFWTHY). Residues 92 to 104 (LISHEGLHNAMCK) lie on the Extracellular side of the membrane. An intrachain disulfide couples C103 to C176. The helical transmembrane segment at 105-126 (LTTAFFFIGFFGGIFFITVISI) threads the bilayer. Residues 127–143 (DRYLAIVLAANSMNNRT) are Cytoplasmic-facing. Residues 144-168 (VQHGVTISLGVWAAAILVASPQFMF) form a helical membrane-spanning segment. At 169–196 (TKRKDNECLGDYPEVLQEMWPVLRNSEV) the chain is on the extracellular side. Residues 197–216 (NILGFALPLLIMSFCYFRII) form a helical membrane-spanning segment. The Cytoplasmic portion of the chain corresponds to 217 to 232 (QTLFSCKNRKKARAVR). A helical membrane pass occupies residues 233–257 (LILLVVFAFFLFWTPYNIMIFLETL). Over 258–274 (KFYNFFPSCDMKRDLRL) the chain is Extracellular. A helical membrane pass occupies residues 275–298 (ALSVTETVAFSHCCLNPFIYAFAG). The Cytoplasmic portion of the chain corresponds to 299-354 (EKFRRYLGHLYRKCLAVLCGHPVHTGFSPESQRSRQDSILSSFTHYTSEGDGSLLL). T345 carries the phosphothreonine modification.

Belongs to the G-protein coupled receptor 1 family. In terms of assembly, found in a ternary complex with CX3CL1 and ITGAV:ITGB3 or ITGA4:ITGB1. Post-translationally, this protein is not N-glycosylated which is unusual for G-protein-coupled receptors. As to expression, specifically expressed in subsets of leukocytes: expressed in monocytes, subsets of T-cells and natural killer (NK) cells in the circulation, dendritic cells, as well as in microglia in the central nervous system (CNS). Expression level subdivides blood monocytes into two major functional subsets; CD14(+)CD16(-)-CX3CR1(low) inflammatory monocytes and CD14(low)CD16(+)CX3CR1(high) homeostatic monocytes. Expressed in myeloid-derived mucosal dendritic cells, which populate the entire lamina propria of the small intestine.

It is found in the cell membrane. Receptor for the C-X3-C chemokine fractalkine (CX3CL1) present on many early leukocyte cells; CX3CR1-CX3CL1 signaling exerts distinct functions in different tissue compartments, such as immune response, inflammation, cell adhesion and chemotaxis. CX3CR1-CX3CL1 signaling mediates cell migratory functions. Responsible for the recruitment of natural killer (NK) cells to inflamed tissues. Acts as a regulator of inflammation process leading to atherogenesis by mediating macrophage and monocyte recruitment to inflamed atherosclerotic plaques, promoting cell survival. Involved in airway inflammation by promoting interleukin 2-producing T helper (Th2) cell survival in inflamed lung. Involved in the migration of circulating monocytes to non-inflamed tissues, where they differentiate into macrophages and dendritic cells. Acts as a negative regulator of angiogenesis, probably by promoting macrophage chemotaxis. Plays a key role in brain microglia by regulating inflammatory response in the central nervous system (CNS) and regulating synapse maturation. Required to restrain the microglial inflammatory response in the CNS and the resulting parenchymal damage in response to pathological stimuli. Involved in brain development by participating in synaptic pruning, a natural process during which brain microglia eliminates extra synapses during postnatal development. Synaptic pruning by microglia is required to promote the maturation of circuit connectivity during brain development. Acts as an important regulator of the gut microbiota by controlling immunity to intestinal bacteria and fungi. Expressed in lamina propria dendritic cells in the small intestine, which form transepithelial dendrites capable of taking up bacteria in order to provide defense against pathogenic bacteria. Required to initiate innate and adaptive immune responses against dissemination of commensal fungi (mycobiota) component of the gut: expressed in mononuclear phagocytes (MNPs) and acts by promoting induction of antifungal IgG antibodies response to confer protection against disseminated C.albicans or C.auris infection. Also acts as a receptor for C-C motif chemokine CCL26, inducing cell chemotaxis. This Mus musculus (Mouse) protein is CX3C chemokine receptor 1.